The primary structure comprises 459 residues: Bifunctional protein GlmU (459 aa).

Residues 1–229 (MTNYAIILAA…FDESLGVNDR (229 aa)) form a pyrophosphorylase region. Residues 8–11 (LAAG), Lys-22, Gln-72, and 77–78 (GT) each bind UDP-N-acetyl-alpha-D-glucosamine. Asp-102 serves as a coordination point for Mg(2+). UDP-N-acetyl-alpha-D-glucosamine contacts are provided by Gly-139, Glu-154, Asn-169, and Asn-227. Asn-227 serves as a coordination point for Mg(2+). Positions 230 to 250 (VALATAESVMRRRINQQHMVN) are linker. An N-acetyltransferase region spans residues 251-459 (GVSFVNPHAT…KRLPHHPQNK (209 aa)). 2 residues coordinate UDP-N-acetyl-alpha-D-glucosamine: Arg-332 and Lys-350. His-362 acts as the Proton acceptor in catalysis. Positions 365 and 376 each coordinate UDP-N-acetyl-alpha-D-glucosamine. Acetyl-CoA is bound by residues Ala-379, 385-386 (NY), Ser-404, Ala-422, and Arg-439.

This sequence in the N-terminal section; belongs to the N-acetylglucosamine-1-phosphate uridyltransferase family. The protein in the C-terminal section; belongs to the transferase hexapeptide repeat family. As to quaternary structure, homotrimer. It depends on Mg(2+) as a cofactor.

The protein resides in the cytoplasm. It catalyses the reaction alpha-D-glucosamine 1-phosphate + acetyl-CoA = N-acetyl-alpha-D-glucosamine 1-phosphate + CoA + H(+). The catalysed reaction is N-acetyl-alpha-D-glucosamine 1-phosphate + UTP + H(+) = UDP-N-acetyl-alpha-D-glucosamine + diphosphate. The protein operates within nucleotide-sugar biosynthesis; UDP-N-acetyl-alpha-D-glucosamine biosynthesis; N-acetyl-alpha-D-glucosamine 1-phosphate from alpha-D-glucosamine 6-phosphate (route II): step 2/2. It participates in nucleotide-sugar biosynthesis; UDP-N-acetyl-alpha-D-glucosamine biosynthesis; UDP-N-acetyl-alpha-D-glucosamine from N-acetyl-alpha-D-glucosamine 1-phosphate: step 1/1. It functions in the pathway bacterial outer membrane biogenesis; LPS lipid A biosynthesis. Functionally, catalyzes the last two sequential reactions in the de novo biosynthetic pathway for UDP-N-acetylglucosamine (UDP-GlcNAc). The C-terminal domain catalyzes the transfer of acetyl group from acetyl coenzyme A to glucosamine-1-phosphate (GlcN-1-P) to produce N-acetylglucosamine-1-phosphate (GlcNAc-1-P), which is converted into UDP-GlcNAc by the transfer of uridine 5-monophosphate (from uridine 5-triphosphate), a reaction catalyzed by the N-terminal domain. The sequence is that of Bifunctional protein GlmU from Streptococcus sanguinis (strain SK36).